We begin with the raw amino-acid sequence, 135 residues long: M-zodatoxin-Lt8q (135 aa).

Positions 1 to 20 are cleaved as a signal peptide; the sequence is MKYFVVALALVAAFACIAES. A propeptide spanning residues 21–60 is cleaved from the precursor; that stretch reads KPAESEHELAEVEEENELADLEDAVWLEHLADLSDLEEAR.

This sequence belongs to the cationic peptide 06 (cytoinsectotoxin) family. In terms of tissue distribution, expressed by the venom gland.

The protein localises to the secreted. Functionally, insecticidal, cytolytic and antimicrobial peptide. Forms voltage-dependent, ion-permeable channels in membranes. At high concentration causes cell membrane lysis. The polypeptide is M-zodatoxin-Lt8q (cit 1-16) (Lachesana tarabaevi (Spider)).